Here is a 578-residue protein sequence, read N- to C-terminus: Tetratricopeptide repeat protein 39A (578 aa).

TPR repeat units follow at residues 280–313 (AIFL…QQHW), 470–503 (CLVK…EKKI), and 511–544 (PNAL…YKNY).

The protein belongs to the TTC39 family.

This chain is Tetratricopeptide repeat protein 39A (Ttc39a), found in Mus musculus (Mouse).